The chain runs to 179 residues: Large ribosomal subunit protein uL5 (179 aa).

Belongs to the universal ribosomal protein uL5 family. Part of the 50S ribosomal subunit; part of the 5S rRNA/L5/L18/L25 subcomplex. Contacts the 5S rRNA and the P site tRNA. Forms a bridge to the 30S subunit in the 70S ribosome.

This is one of the proteins that bind and probably mediate the attachment of the 5S RNA into the large ribosomal subunit, where it forms part of the central protuberance. In the 70S ribosome it contacts protein S13 of the 30S subunit (bridge B1b), connecting the 2 subunits; this bridge is implicated in subunit movement. Contacts the P site tRNA; the 5S rRNA and some of its associated proteins might help stabilize positioning of ribosome-bound tRNAs. The protein is Large ribosomal subunit protein uL5 of Shewanella pealeana (strain ATCC 700345 / ANG-SQ1).